The following is a 376-amino-acid chain: Putative dihydroorotase (376 aa).

Residues His35 and His37 each coordinate Zn(2+). Residues His37–Arg39 and Asn66 contribute to the substrate site. 3 residues coordinate Zn(2+): Asp114, His138, and His187. Asn230 is a substrate binding site. Zn(2+) is bound at residue Asp257. Residue Asp257 is part of the active site. Residues His261 and Tyr273–Gly274 each bind substrate.

Belongs to the metallo-dependent hydrolases superfamily. DHOase family. Class I DHOase subfamily. The cofactor is Zn(2+).

It catalyses the reaction (S)-dihydroorotate + H2O = N-carbamoyl-L-aspartate + H(+). It participates in pyrimidine metabolism; UMP biosynthesis via de novo pathway; (S)-dihydroorotate from bicarbonate: step 3/3. Functionally, catalyzes the reversible cyclization of carbamoyl aspartate to dihydroorotate. The polypeptide is Putative dihydroorotase (pyrC) (Thermotoga maritima (strain ATCC 43589 / DSM 3109 / JCM 10099 / NBRC 100826 / MSB8)).